A 452-amino-acid polypeptide reads, in one-letter code: Phosphoglucosamine mutase (452 aa).

Catalysis depends on Ser103, which acts as the Phosphoserine intermediate. Residues Ser103, Asp243, Asp245, and Asp247 each coordinate Mg(2+). Ser103 carries the post-translational modification Phosphoserine.

The protein belongs to the phosphohexose mutase family. Mg(2+) serves as cofactor. Post-translationally, activated by phosphorylation.

The catalysed reaction is alpha-D-glucosamine 1-phosphate = D-glucosamine 6-phosphate. Functionally, catalyzes the conversion of glucosamine-6-phosphate to glucosamine-1-phosphate. The sequence is that of Phosphoglucosamine mutase from Lactobacillus acidophilus (strain ATCC 700396 / NCK56 / N2 / NCFM).